The primary structure comprises 158 residues: NAD(P)H-quinone oxidoreductase subunit N (158 aa).

The protein belongs to the complex I NdhN subunit family. NDH-1 can be composed of about 15 different subunits; different subcomplexes with different compositions have been identified which probably have different functions.

The protein resides in the cellular thylakoid membrane. It carries out the reaction a plastoquinone + NADH + (n+1) H(+)(in) = a plastoquinol + NAD(+) + n H(+)(out). The enzyme catalyses a plastoquinone + NADPH + (n+1) H(+)(in) = a plastoquinol + NADP(+) + n H(+)(out). Functionally, NDH-1 shuttles electrons from an unknown electron donor, via FMN and iron-sulfur (Fe-S) centers, to quinones in the respiratory and/or the photosynthetic chain. The immediate electron acceptor for the enzyme in this species is believed to be plastoquinone. Couples the redox reaction to proton translocation, and thus conserves the redox energy in a proton gradient. Cyanobacterial NDH-1 also plays a role in inorganic carbon-concentration. The protein is NAD(P)H-quinone oxidoreductase subunit N of Prochlorococcus marinus (strain MIT 9215).